The following is a 232-amino-acid chain: Putative N-acetylmannosamine-6-phosphate 2-epimerase (232 aa).

Belongs to the NanE family.

The enzyme catalyses an N-acyl-D-glucosamine 6-phosphate = an N-acyl-D-mannosamine 6-phosphate. It functions in the pathway amino-sugar metabolism; N-acetylneuraminate degradation; D-fructose 6-phosphate from N-acetylneuraminate: step 3/5. In terms of biological role, converts N-acetylmannosamine-6-phosphate (ManNAc-6-P) to N-acetylglucosamine-6-phosphate (GlcNAc-6-P). This chain is Putative N-acetylmannosamine-6-phosphate 2-epimerase, found in Synechococcus elongatus (strain ATCC 33912 / PCC 7942 / FACHB-805) (Anacystis nidulans R2).